The primary structure comprises 379 residues: Retinoic acid receptor RXR-alpha-B (379 aa).

Positions 1–22 (MPVPEQKQTVQLSSPMNAVSSS) are enriched in polar residues. The segment at 1-24 (MPVPEQKQTVQLSSPMNAVSSSED) is disordered. The interval 1–53 (MPVPEQKQTVQLSSPMNAVSSSEDIKPPLGLNGVMKVPAHRIGTLSLSLTKHI) is modulating. A DNA-binding region (nuclear receptor) is located at residues 51 to 126 (KHICAICGDR…MGMKREAVQE (76 aa)). 4 residues coordinate Zn(2+): cysteine 54, cysteine 57, cysteine 71, and cysteine 74. The segment at 54 to 74 (CAICGDRSSGKHYGVYSCEGC) adopts an NR C4-type zinc-finger fold. The interval 79 to 84 (KRTVRK) is nuclear localization signal. Residues cysteine 90, cysteine 96, cysteine 106, and cysteine 109 each contribute to the Zn(2+) site. Residues 90 to 109 (CRDNKDCMIDKRQRNRCQYC) form an NR C4-type zinc finger. The tract at residues 120–141 (KREAVQEERQRAKERSEAEFGG) is hinge. In terms of domain architecture, NR LBD spans 144–375 (NEDMPVEKIL…TFLMEMLEAP (232 aa)). 9-cis-retinoate contacts are provided by arginine 233 and alanine 244. Residues arginine 233 and alanine 244 each contribute to the all-trans-retinoate site. The segment at 265-285 (RVLTELVSKMRDMQMDKTELG) is required for nuclear export. The segment at 364–375 (IDTFLMEMLEAP) is AF-2.

The protein belongs to the nuclear hormone receptor family. NR2 subfamily. Homodimer. Heterodimer; with a rar molecule. Binds DNA preferentially as a rar/rxr heterodimer. In terms of tissue distribution, uniform expression from the blastula to mid-gastrula stages. At 12 hours post-fertilization (hpf), expressed strongly in the tail and weakly elsewhere. At 24 hpf, weak expression in the forebrain, eyes and pharyngeal endoderm and continued expression in the tail mesoderm. At 48 hpf, anterior expression limited to ventral cells underlying the head, medial expression in the pectoral fin bud mesoderm and continued tail expression.

The protein localises to the nucleus. Functionally, receptor for retinoic acid that acts as a transcription factor. Forms homo- or heterodimers with retinoic acid receptors (rars) and binds to target response elements in response to their ligands, all-trans or 9-cis retinoic acid, to regulate gene expression in various biological processes. The rar/rxr heterodimers bind to the retinoic acid response elements (RARE) composed of tandem 5'-AGGTCA-3' sites known as DR1-DR5 to regulate transcription. The high affinity ligand for rxrs is 9-cis retinoic acid. In the absence of ligand, the rar/rxr heterodimers associate with a multiprotein complex containing transcription corepressors that induce histone deacetylation, chromatin condensation and transcriptional suppression. On ligand binding, the corepressors dissociate from the receptors and coactivators are recruited leading to transcriptional activation. This chain is Retinoic acid receptor RXR-alpha-B (rxrab), found in Danio rerio (Zebrafish).